Consider the following 311-residue polypeptide: Maspardin (311 aa).

Positions 86–159 (EFCDGFRKLL…NSFWLMPSFM (74 aa)) constitute an AB hydrolase-1 domain.

This sequence belongs to the AB hydrolase superfamily.

The protein resides in the cytoplasm. The protein is Maspardin (spg21) of Danio rerio (Zebrafish).